The sequence spans 244 residues: ATP synthase subunit a, chloroplastic (244 aa).

5 helical membrane passes run 35–55, 92–112, 131–151, 196–216, and 217–237; these read QVLI…VIAV, VPFI…GALL, INTT…AGLS, LVVV…VMFL, and GLFI…AYIG.

This sequence belongs to the ATPase A chain family. As to quaternary structure, F-type ATPases have 2 components, CF(1) - the catalytic core - and CF(0) - the membrane proton channel. CF(1) has five subunits: alpha(3), beta(3), gamma(1), delta(1), epsilon(1). CF(0) has four main subunits: a, b, b' and c.

The protein resides in the plastid. The protein localises to the chloroplast thylakoid membrane. In terms of biological role, key component of the proton channel; it plays a direct role in the translocation of protons across the membrane. The sequence is that of ATP synthase subunit a, chloroplastic from Gossypium barbadense (Sea Island cotton).